Reading from the N-terminus, the 284-residue chain is Phosphatidylserine decarboxylase proenzyme (284 aa).

Residues Asp-88, His-145, and Ser-248 each act as charge relay system; for autoendoproteolytic cleavage activity in the active site. Ser-248 serves as the catalytic Schiff-base intermediate with substrate; via pyruvic acid; for decarboxylase activity. Ser-248 carries the post-translational modification Pyruvic acid (Ser); by autocatalysis.

It belongs to the phosphatidylserine decarboxylase family. PSD-B subfamily. Prokaryotic type I sub-subfamily. As to quaternary structure, heterodimer of a large membrane-associated beta subunit and a small pyruvoyl-containing alpha subunit. It depends on pyruvate as a cofactor. Post-translationally, is synthesized initially as an inactive proenzyme. Formation of the active enzyme involves a self-maturation process in which the active site pyruvoyl group is generated from an internal serine residue via an autocatalytic post-translational modification. Two non-identical subunits are generated from the proenzyme in this reaction, and the pyruvate is formed at the N-terminus of the alpha chain, which is derived from the carboxyl end of the proenzyme. The autoendoproteolytic cleavage occurs by a canonical serine protease mechanism, in which the side chain hydroxyl group of the serine supplies its oxygen atom to form the C-terminus of the beta chain, while the remainder of the serine residue undergoes an oxidative deamination to produce ammonia and the pyruvoyl prosthetic group on the alpha chain. During this reaction, the Ser that is part of the protease active site of the proenzyme becomes the pyruvoyl prosthetic group, which constitutes an essential element of the active site of the mature decarboxylase.

The protein localises to the cell membrane. It carries out the reaction a 1,2-diacyl-sn-glycero-3-phospho-L-serine + H(+) = a 1,2-diacyl-sn-glycero-3-phosphoethanolamine + CO2. The protein operates within phospholipid metabolism; phosphatidylethanolamine biosynthesis; phosphatidylethanolamine from CDP-diacylglycerol: step 2/2. Functionally, catalyzes the formation of phosphatidylethanolamine (PtdEtn) from phosphatidylserine (PtdSer). The protein is Phosphatidylserine decarboxylase proenzyme of Albidiferax ferrireducens (strain ATCC BAA-621 / DSM 15236 / T118) (Rhodoferax ferrireducens).